Reading from the N-terminus, the 307-residue chain is UDP-3-O-acyl-N-acetylglucosamine deacetylase (307 aa).

H80, H239, and D243 together coordinate Zn(2+). H266 acts as the Proton donor in catalysis.

Belongs to the LpxC family. Zn(2+) is required as a cofactor.

The catalysed reaction is a UDP-3-O-[(3R)-3-hydroxyacyl]-N-acetyl-alpha-D-glucosamine + H2O = a UDP-3-O-[(3R)-3-hydroxyacyl]-alpha-D-glucosamine + acetate. It functions in the pathway glycolipid biosynthesis; lipid IV(A) biosynthesis; lipid IV(A) from (3R)-3-hydroxytetradecanoyl-[acyl-carrier-protein] and UDP-N-acetyl-alpha-D-glucosamine: step 2/6. Catalyzes the hydrolysis of UDP-3-O-myristoyl-N-acetylglucosamine to form UDP-3-O-myristoylglucosamine and acetate, the committed step in lipid A biosynthesis. The protein is UDP-3-O-acyl-N-acetylglucosamine deacetylase of Neisseria meningitidis serogroup C / serotype 2a (strain ATCC 700532 / DSM 15464 / FAM18).